The sequence spans 212 residues: Leucine efflux protein (212 aa).

6 helical membrane-spanning segments follow: residues 12 to 32 (TYLV…LFVL), 49 to 69 (GVFI…ATLI), 71 to 91 (TTPI…LYLG), 122 to 142 (ILSL…VQFI), 153 to 173 (FFIL…FLII), and 188 to 208 (LAKV…ARLA).

The protein belongs to the Rht family.

It localises to the cell inner membrane. It catalyses the reaction L-leucine(in) + H(+)(out) = L-leucine(out) + H(+)(in). With respect to regulation, leucine export is inhibited by the proton ionophore carbonyl cyanide m-chlorophenylhydrazone (CCCP). Exporter of leucine. Can also transport its natural analog L-alpha-amino-n-butyric acid and some other structurally unrelated amino acids. Leucine excretion is probably driven by proton motive force. This chain is Leucine efflux protein, found in Escherichia coli (strain K12).